A 398-amino-acid polypeptide reads, in one-letter code: tRNA (guanine-N(7)-)-methyltransferase (398 aa).

Residues glutamate 124, glutamate 149, and aspartate 176 each coordinate S-adenosyl-L-methionine. Aspartate 232 contacts substrate.

This sequence belongs to the class I-like SAM-binding methyltransferase superfamily. TrmB family.

It carries out the reaction guanosine(46) in tRNA + S-adenosyl-L-methionine = N(7)-methylguanosine(46) in tRNA + S-adenosyl-L-homocysteine. It participates in tRNA modification; N(7)-methylguanine-tRNA biosynthesis. Functionally, catalyzes the formation of N(7)-methylguanine at position 46 (m7G46) in tRNA. The chain is tRNA (guanine-N(7)-)-methyltransferase from Helicobacter acinonychis (strain Sheeba).